Reading from the N-terminus, the 492-residue chain is MNTQHSKTDVILIGGGIMSATLGTLLKELTPEKDIQLFERLSQPGEESSNVWNNAGTGHSALCELNYTKEGKDGSVDITKAIHINEQFQISKQFWAYLIREGHIESPDKFIQSVPHMSFVKGEENVKFLKSRVASLQKNVLFEKMKISQDPEKINSWVPLMMEGRQSDEAIAITYDETGTDVNFGALTKKLIANLQQKNVGINYKHEVLDIKKLNNGNWQVVVKDLNTSNVMNYESKFVFIGAGGASLPLLQKTKIKESKHIGGFPVSGLFLRCKNPDVIHRHHAKVYGKAEVGAPPMSVPHLDTRFVNGEKSLLFGPFAGFSPKFLKNGSYLDLVKSVKPNNMITMLSAGVKEFNLTKYLVSQLMLSNEERINDLRVFLPEAKDEDWEVITAGQRVQVIKDTDKSKGQLQFGTEVITSEDGSLAALLGASPGASTAVDIMFDVLQRCYKSEFKSWEPKIKEMVPSFGLKLSEHEDMYHSINEEVKKYLNVK.

This sequence belongs to the MQO family. FAD is required as a cofactor.

It carries out the reaction (S)-malate + a quinone = a quinol + oxaloacetate. Its pathway is carbohydrate metabolism; tricarboxylic acid cycle; oxaloacetate from (S)-malate (quinone route): step 1/1. The chain is Probable malate:quinone oxidoreductase 1 from Staphylococcus epidermidis (strain ATCC 35984 / DSM 28319 / BCRC 17069 / CCUG 31568 / BM 3577 / RP62A).